Consider the following 365-residue polypeptide: Transcription factor aptf-1 (365 aa).

Disordered regions lie at residues 13-40 (EFVR…PFYE) and 93-126 (TPPQ…SNYS). The H-S-H (helix-span-helix), dimerization stretch occupies residues 223–356 (RRKQANVTAW…MIDESIKYID (134 aa)).

It belongs to the AP-2 family. As to quaternary structure, binds DNA as a dimer. In terms of tissue distribution, expressed in five interneurons AIB, RIB and RIS.

The protein resides in the nucleus. Its function is as follows. Transcription factor, which is required in the single sleep-active ring interneuron RIS for sleep-like behavioral quiescence induced by neuropeptide signaling in larvae. Regulates gene expression of sleep-inducing FMRFamide-like neuropeptide flp-11 in RIS. The polypeptide is Transcription factor aptf-1 (Caenorhabditis elegans).